Here is a 486-residue protein sequence, read N- to C-terminus: Aspartyl/glutamyl-tRNA(Asn/Gln) amidotransferase subunit B (486 aa).

Belongs to the GatB/GatE family. GatB subfamily. Heterotrimer of A, B and C subunits.

The catalysed reaction is L-glutamyl-tRNA(Gln) + L-glutamine + ATP + H2O = L-glutaminyl-tRNA(Gln) + L-glutamate + ADP + phosphate + H(+). It carries out the reaction L-aspartyl-tRNA(Asn) + L-glutamine + ATP + H2O = L-asparaginyl-tRNA(Asn) + L-glutamate + ADP + phosphate + 2 H(+). In terms of biological role, allows the formation of correctly charged Asn-tRNA(Asn) or Gln-tRNA(Gln) through the transamidation of misacylated Asp-tRNA(Asn) or Glu-tRNA(Gln) in organisms which lack either or both of asparaginyl-tRNA or glutaminyl-tRNA synthetases. The reaction takes place in the presence of glutamine and ATP through an activated phospho-Asp-tRNA(Asn) or phospho-Glu-tRNA(Gln). This Janthinobacterium sp. (strain Marseille) (Minibacterium massiliensis) protein is Aspartyl/glutamyl-tRNA(Asn/Gln) amidotransferase subunit B.